The sequence spans 60 residues: Potassium channel toxin alpha-KTx 29.3 (60 aa).

The first 28 residues, 1–28 (MKSVCGVLIILVVLTTMLSISTFSTVGA), serve as a signal peptide directing secretion. 3 disulfide bridges follow: Cys32–Cys51, Cys40–Cys56, and Cys44–Cys58.

The protein belongs to the short scorpion toxin superfamily. Potassium channel inhibitor family. Alpha-KTx 29 subfamily. As to expression, expressed by the venom gland.

It is found in the secreted. Weakly inhibits the Kv1.3/KCNA3 channel (1 uM of thetoxin inhibits currents by 13.2%) and Kv7.1/KCNQ1 channel (10 uM of the toxin inhibits currents by 27.7%). This is Potassium channel toxin alpha-KTx 29.3 from Lychas mucronatus (Chinese swimming scorpion).